The sequence spans 318 residues: Guanidinopropionase (318 aa).

Residues H126, D148, H150, D152, D240, and D242 each coordinate Mn(2+).

It belongs to the arginase family. Agmatinase subfamily. As to quaternary structure, homohexamer. The cofactor is Mn(2+).

The catalysed reaction is 3-guanidinopropanoate + H2O = urea + beta-alanine. Catalyzes the hydrolysis of 3-guanidinopropanoate to beta-alanine and urea. Possesses low activity against 4-guanidinobutanoate. Has no activity against arginine and agmatine. This Pseudomonas aeruginosa (strain ATCC 15692 / DSM 22644 / CIP 104116 / JCM 14847 / LMG 12228 / 1C / PRS 101 / PAO1) protein is Guanidinopropionase (gpuA).